The sequence spans 108 residues: UPF0235 protein Rpal_0418 (108 aa).

The protein belongs to the UPF0235 family.

In Rhodopseudomonas palustris (strain TIE-1), this protein is UPF0235 protein Rpal_0418.